The chain runs to 141 residues: Vesicle-associated membrane protein 4 (141 aa).

The tract at residues 1–51 (MPPKFKRHLNDDDVTGSVKSERRNLLEDDSDEEEDFFLRGPSGPRFGPRND) is disordered. Residues 1–115 (MPPKFKRHLN…RRQMWWRGCK (115 aa)) lie on the Cytoplasmic side of the membrane. A phosphoserine mark is found at serine 17 and serine 30. The 61-residue stretch at 52 to 112 (KIKHVQNQVD…KQLRRQMWWR (61 aa)) folds into the v-SNARE coiled-coil homology domain. The helical; Anchor for type IV membrane protein transmembrane segment at 116 to 136 (IKAIMALVAAILLLVIIILIV) threads the bilayer. The Vesicular segment spans residues 137–141 (MKYRT).

Belongs to the synaptobrevin family. In terms of assembly, identified in a complex containing STX6, STX12, VAMP4 and VTI1A. Interacts with BAIAP3; this interaction is increased in the presence of calcium.

The protein resides in the golgi apparatus. It localises to the trans-Golgi network membrane. Its function is as follows. Involved in the pathway that functions to remove an inhibitor (probably synaptotagmin-4) of calcium-triggered exocytosis during the maturation of secretory granules. May be a marker for this sorting pathway that is critical for remodeling the secretory response of granule. The sequence is that of Vesicle-associated membrane protein 4 (VAMP4) from Homo sapiens (Human).